The following is a 675-amino-acid chain: UvrABC system protein B (675 aa).

The 386-residue stretch at 32–417 (EGLSDGLAYQ…EHAGQVVEQV (386 aa)) folds into the Helicase ATP-binding domain. 45–52 (GVTGSGKT) contacts ATP. Positions 98-121 (YYDYYQPEAYVPSRDLFIEKDSAI) match the Beta-hairpin motif. The 167-residue stretch at 436–602 (QVDDLMSEIN…QIKKQVKDII (167 aa)) folds into the Helicase C-terminal domain. One can recognise a UVR domain in the interval 634 to 669 (IKEIAKLEKAMQQAARDLQFEEAAVLRDRIRNIKEN).

It belongs to the UvrB family. As to quaternary structure, forms a heterotetramer with UvrA during the search for lesions. Interacts with UvrC in an incision complex.

The protein resides in the cytoplasm. Functionally, the UvrABC repair system catalyzes the recognition and processing of DNA lesions. A damage recognition complex composed of 2 UvrA and 2 UvrB subunits scans DNA for abnormalities. Upon binding of the UvrA(2)B(2) complex to a putative damaged site, the DNA wraps around one UvrB monomer. DNA wrap is dependent on ATP binding by UvrB and probably causes local melting of the DNA helix, facilitating insertion of UvrB beta-hairpin between the DNA strands. Then UvrB probes one DNA strand for the presence of a lesion. If a lesion is found the UvrA subunits dissociate and the UvrB-DNA preincision complex is formed. This complex is subsequently bound by UvrC and the second UvrB is released. If no lesion is found, the DNA wraps around the other UvrB subunit that will check the other stand for damage. The polypeptide is UvrABC system protein B (Neisseria gonorrhoeae).